Here is a 571-residue protein sequence, read N- to C-terminus: Translation initiation factor IF-2 (571 aa).

A tr-type G domain is found at 71-239 (RRPPVVVIMG…ILLLAELEDY (169 aa)). The tract at residues 80 to 87 (GHVDHGKT) is G1. 80-87 (GHVDHGKT) serves as a coordination point for GTP. Residues 105-109 (GITQH) are G2. The interval 126–129 (DTPG) is G3. GTP contacts are provided by residues 126–130 (DTPGH) and 180–183 (NKID). The segment at 180 to 183 (NKID) is G4. Residues 216 to 218 (SAK) form a G5 region.

The protein belongs to the TRAFAC class translation factor GTPase superfamily. Classic translation factor GTPase family. IF-2 subfamily.

Its subcellular location is the cytoplasm. Functionally, one of the essential components for the initiation of protein synthesis. Protects formylmethionyl-tRNA from spontaneous hydrolysis and promotes its binding to the 30S ribosomal subunits. Also involved in the hydrolysis of GTP during the formation of the 70S ribosomal complex. The polypeptide is Translation initiation factor IF-2 (Thermus thermophilus (strain ATCC BAA-163 / DSM 7039 / HB27)).